Here is a 148-residue protein sequence, read N- to C-terminus: HTH-type transcriptional regulator Rv2324 (148 aa).

Residues 4-65 (LDDTDERILA…VVDRNALGWN (62 aa)) enclose the HTH asnC-type domain. Residues 23-42 (FAEIGHKVSLSAPAVKRRVD) constitute a DNA-binding region (H-T-H motif).

In terms of assembly, homodimer. Forms oligomers.

Its activity is regulated as follows. The DNA-binding activity of Rv2324 is modulated by interaction of Rv2324 with amino acids. Aspartate is the only effector amino acid that completely abolishes DNA binding. The majority of amino acids induce a dimer-tetramer or dimer-hexamer oligomeric transition. In response to amino-acid binding, adopts an open quaternary association, which is a part of the functional requirement to bind to non-symmetrically distributed target DNA binding sites. Transcriptional regulator involved in growth, DNA replication and damage control. Plays a crucial role in regulating survival and growth of M.tuberculosis. Could function as a global regulator in both the latent/persistent and active phases of growth. Binds to its own promoter region and to promoters of multiple metabolic genes, such as serB2, lat, ald and roc operon. In vitro, interacts with intrinsically curved and non-curved DNA molecules, and with both supercoiled and linear DNA, with higher affinity for supercoiled DNA. Binds to DNA recombination, replication and repair intermediates. The polypeptide is HTH-type transcriptional regulator Rv2324 (Mycobacterium tuberculosis (strain ATCC 25618 / H37Rv)).